A 597-amino-acid chain; its full sequence is MDDYFSAEEEACYYSSDQDSLDGIDNEESELQPLSSKRSNTQVITQESLLAAQREDLLRVMELLSIKEHHARTLLIHYQWDVEKLFAVFVEKGKDSLFSGAGVTVFDYQYGNSSFPQSSQMSCDVCMEDLPGDHMTRMDCGHCFCNNCWTEHFTVQINEGQSKRIRCMAHQCNAICDEDIVRSLVSKKRPDLAAKFDRYLLESYIEDNRMVKWCPSTPHCGNAIRAEDDKLCEVECSCGLQFCFSCLCQAHSPCSCLMWELWRKKCRDESETINWITVHTKLCPKCYKPVEKNGGCNLVRCICGQCFCWLCGGATGSDHTYRSIAGHSCGRYQDDKEKQMERAKRDLNRYTHYHHRYKAHTDSSKLEDKLRDTIHEKVSKSEKRELKLKDFSWVTNGLDRLFRSRRVLSYSYAFAYYMFGEEMFKDEMTPEEREIKKNLFEDQQQQLESNVEKLSQFLEEPFDEFSNDKVMAIRIQIINLSVAVDTLCKKMYECIENDLLGSLQLGIHNISPYRSKGIEQAAQFYASWNSKDADKFQPLDSGTSGVTSRPEQASGSRSSEDTICSSSQKRPKKEGSFLNNKVTLLDLNLPADFVDQN.

The segment at Ser-119–Gln-333 is TRIAD supradomain. The Zn(2+) site is built by Cys-123, Cys-126, Cys-140, His-142, Cys-145, Cys-148, Cys-167, Cys-172, Cys-214, Cys-220, Cys-236, Cys-238, Cys-243, Cys-246, His-251, Cys-256, Cys-283, and Cys-286. The RING-type 1 zinc finger occupies Cys-123–Cys-172. The IBR-type zinc-finger motif lies at Ala-194–Cys-256. The RING-type 2; atypical zinc-finger motif lies at Cys-283 to Cys-311. The active site involves Cys-296. 6 residues coordinate Zn(2+): Cys-301, Cys-303, Cys-308, Cys-311, His-319, and Cys-329. Residues Phe-536 to Gly-575 form a disordered region. A compositionally biased stretch (polar residues) spans Asp-540–Gln-568.

This sequence belongs to the RBR family. Ariadne subfamily. Zn(2+) is required as a cofactor. Ubiquitous.

It catalyses the reaction [E2 ubiquitin-conjugating enzyme]-S-ubiquitinyl-L-cysteine + [acceptor protein]-L-lysine = [E2 ubiquitin-conjugating enzyme]-L-cysteine + [acceptor protein]-N(6)-ubiquitinyl-L-lysine.. The protein operates within protein modification; protein ubiquitination. Might act as an E3 ubiquitin-protein ligase, or as part of E3 complex, which accepts ubiquitin from specific E2 ubiquitin-conjugating enzymes and then transfers it to substrates. The chain is Probable E3 ubiquitin-protein ligase ARI1 (ARI1) from Arabidopsis thaliana (Mouse-ear cress).